The primary structure comprises 82 residues: ATP synthase subunit c, chloroplastic (82 aa).

Helical transmembrane passes span 3–23 (PIVA…AAIG) and 57–77 (FAFM…LLFA).

This sequence belongs to the ATPase C chain family. As to quaternary structure, F-type ATPases have 2 components, F(1) - the catalytic core - and F(0) - the membrane proton channel. F(1) has five subunits: alpha(3), beta(3), gamma(1), delta(1), epsilon(1). F(0) has four main subunits: a(1), b(1), b'(1) and c(10-14). The alpha and beta chains form an alternating ring which encloses part of the gamma chain. F(1) is attached to F(0) by a central stalk formed by the gamma and epsilon chains, while a peripheral stalk is formed by the delta, b and b' chains.

Its subcellular location is the plastid. It is found in the chloroplast thylakoid membrane. In terms of biological role, f(1)F(0) ATP synthase produces ATP from ADP in the presence of a proton or sodium gradient. F-type ATPases consist of two structural domains, F(1) containing the extramembraneous catalytic core and F(0) containing the membrane proton channel, linked together by a central stalk and a peripheral stalk. During catalysis, ATP synthesis in the catalytic domain of F(1) is coupled via a rotary mechanism of the central stalk subunits to proton translocation. Key component of the F(0) channel; it plays a direct role in translocation across the membrane. A homomeric c-ring of between 10-14 subunits forms the central stalk rotor element with the F(1) delta and epsilon subunits. This Tetradesmus obliquus (Green alga) protein is ATP synthase subunit c, chloroplastic.